Reading from the N-terminus, the 345-residue chain is Dihydroorotase (345 aa).

Zn(2+) is bound by residues His13 and His15. Residues His15 to Arg17 and Asn41 each bind substrate. Residues Lys99, His136, and His174 each coordinate Zn(2+). An N6-carboxylysine modification is found at Lys99. Substrate is bound at residue His136. A substrate-binding site is contributed by Leu219. Asp247 provides a ligand contact to Zn(2+). Asp247 is an active-site residue. 2 residues coordinate substrate: His251 and Ala263.

Belongs to the metallo-dependent hydrolases superfamily. DHOase family. Class II DHOase subfamily. Homodimer. The cofactor is Zn(2+).

It catalyses the reaction (S)-dihydroorotate + H2O = N-carbamoyl-L-aspartate + H(+). The protein operates within pyrimidine metabolism; UMP biosynthesis via de novo pathway; (S)-dihydroorotate from bicarbonate: step 3/3. In terms of biological role, catalyzes the reversible cyclization of carbamoyl aspartate to dihydroorotate. The protein is Dihydroorotase of Acaryochloris marina (strain MBIC 11017).